An 80-amino-acid chain; its full sequence is Cytochrome c oxidase subunit 7B, mitochondrial (80 aa).

Residues 1 to 24 (MLPLAKNALSRLQVRSIQQVVARQ) constitute a mitochondrion transit peptide. The Mitochondrial matrix segment spans residues 25 to 32 (SHQKKTPT). A helical membrane pass occupies residues 33-59 (FHDKYGNAVLAGGSIFCISAWTYTATQ). The Mitochondrial intermembrane portion of the chain corresponds to 60–80 (IGIEWNLSPVGRVTPKEWRDQ).

This sequence belongs to the cytochrome c oxidase VIIb family. In terms of assembly, component of the cytochrome c oxidase (complex IV, CIV), a multisubunit enzyme composed of 14 subunits. The complex is composed of a catalytic core of 3 subunits MT-CO1, MT-CO2 and MT-CO3, encoded in the mitochondrial DNA, and 11 supernumerary subunits COX4I, COX5A, COX5B, COX6A, COX6B, COX6C, COX7A, COX7B, COX7C, COX8 and NDUFA4, which are encoded in the nuclear genome. The complex exists as a monomer or a dimer and forms supercomplexes (SCs) in the inner mitochondrial membrane with NADH-ubiquinone oxidoreductase (complex I, CI) and ubiquinol-cytochrome c oxidoreductase (cytochrome b-c1 complex, complex III, CIII), resulting in different assemblies (supercomplex SCI(1)III(2)IV(1) and megacomplex MCI(2)III(2)IV(2)).

It localises to the mitochondrion inner membrane. The protein operates within energy metabolism; oxidative phosphorylation. Component of the cytochrome c oxidase, the last enzyme in the mitochondrial electron transport chain which drives oxidative phosphorylation. The respiratory chain contains 3 multisubunit complexes succinate dehydrogenase (complex II, CII), ubiquinol-cytochrome c oxidoreductase (cytochrome b-c1 complex, complex III, CIII) and cytochrome c oxidase (complex IV, CIV), that cooperate to transfer electrons derived from NADH and succinate to molecular oxygen, creating an electrochemical gradient over the inner membrane that drives transmembrane transport and the ATP synthase. Cytochrome c oxidase is the component of the respiratory chain that catalyzes the reduction of oxygen to water. Electrons originating from reduced cytochrome c in the intermembrane space (IMS) are transferred via the dinuclear copper A center (CU(A)) of subunit 2 and heme A of subunit 1 to the active site in subunit 1, a binuclear center (BNC) formed by heme A3 and copper B (CU(B)). The BNC reduces molecular oxygen to 2 water molecules using 4 electrons from cytochrome c in the IMS and 4 protons from the mitochondrial matrix. Plays a role in proper central nervous system (CNS) development in vertebrates. The protein is Cytochrome c oxidase subunit 7B, mitochondrial (Cox7b) of Rattus norvegicus (Rat).